A 133-amino-acid polypeptide reads, in one-letter code: ATP synthase epsilon chain, chloroplastic (133 aa).

It belongs to the ATPase epsilon chain family. In terms of assembly, F-type ATPases have 2 components, CF(1) - the catalytic core - and CF(0) - the membrane proton channel. CF(1) has five subunits: alpha(3), beta(3), gamma(1), delta(1), epsilon(1). CF(0) has three main subunits: a, b and c.

It localises to the plastid. Its subcellular location is the chloroplast thylakoid membrane. Produces ATP from ADP in the presence of a proton gradient across the membrane. In Trieres chinensis (Marine centric diatom), this protein is ATP synthase epsilon chain, chloroplastic.